Reading from the N-terminus, the 709-residue chain is Fatty acid oxidation complex subunit alpha (709 aa).

Residues 1–188 (MEKTFNLTRR…KMGLVNDVVP (188 aa)) are enoyl-CoA hydratase. The interval 308–709 (RKVKKAVILG…EMAAEKTRFF (402 aa)) is 3-hydroxyacyl-CoA dehydrogenase.

The protein in the N-terminal section; belongs to the enoyl-CoA hydratase/isomerase family. In the central section; belongs to the 3-hydroxyacyl-CoA dehydrogenase family. Heterotetramer of two alpha chains (FadJ) and two beta chains (FadI).

It localises to the cytoplasm. The catalysed reaction is a (3S)-3-hydroxyacyl-CoA = a (2E)-enoyl-CoA + H2O. It catalyses the reaction a 4-saturated-(3S)-3-hydroxyacyl-CoA = a (3E)-enoyl-CoA + H2O. The enzyme catalyses a (3S)-3-hydroxyacyl-CoA + NAD(+) = a 3-oxoacyl-CoA + NADH + H(+). It carries out the reaction (3S)-3-hydroxybutanoyl-CoA = (3R)-3-hydroxybutanoyl-CoA. It functions in the pathway lipid metabolism; fatty acid beta-oxidation. Functionally, catalyzes the formation of a hydroxyacyl-CoA by addition of water on enoyl-CoA. Also exhibits 3-hydroxyacyl-CoA epimerase and 3-hydroxyacyl-CoA dehydrogenase activities. The sequence is that of Fatty acid oxidation complex subunit alpha from Shewanella sp. (strain MR-4).